We begin with the raw amino-acid sequence, 161 residues long: Endoribonuclease YbeY (161 aa).

3 residues coordinate Zn(2+): His-127, His-131, and His-137.

The protein belongs to the endoribonuclease YbeY family. Zn(2+) serves as cofactor.

The protein localises to the cytoplasm. Functionally, single strand-specific metallo-endoribonuclease involved in late-stage 70S ribosome quality control and in maturation of the 3' terminus of the 16S rRNA. This is Endoribonuclease YbeY from Listeria welshimeri serovar 6b (strain ATCC 35897 / DSM 20650 / CCUG 15529 / CIP 8149 / NCTC 11857 / SLCC 5334 / V8).